The chain runs to 137 residues: CUB domain-containing protein (137 aa).

The N-terminal stretch at Met-1–Ala-21 is a signal peptide. Intrachain disulfides connect Cys-30–Cys-51 and Cys-75–Cys-96. The CUB domain maps to Cys-30–Asp-132.

The chain is CUB domain-containing protein from Homo sapiens (Human).